We begin with the raw amino-acid sequence, 122 residues long: Small ribosomal subunit protein uS13 (122 aa).

Positions 95–122 (SLPVRGQRTHTNARTRKGPAKSIAGKKK) are disordered.

It belongs to the universal ribosomal protein uS13 family. Part of the 30S ribosomal subunit. Forms a loose heterodimer with protein S19. Forms two bridges to the 50S subunit in the 70S ribosome.

Its function is as follows. Located at the top of the head of the 30S subunit, it contacts several helices of the 16S rRNA. In the 70S ribosome it contacts the 23S rRNA (bridge B1a) and protein L5 of the 50S subunit (bridge B1b), connecting the 2 subunits; these bridges are implicated in subunit movement. Contacts the tRNAs in the A and P-sites. The polypeptide is Small ribosomal subunit protein uS13 (Mesorhizobium japonicum (strain LMG 29417 / CECT 9101 / MAFF 303099) (Mesorhizobium loti (strain MAFF 303099))).